The primary structure comprises 582 residues: Proline--tRNA ligase (582 aa).

It belongs to the class-II aminoacyl-tRNA synthetase family. ProS type 1 subfamily. As to quaternary structure, homodimer.

The protein localises to the cytoplasm. The catalysed reaction is tRNA(Pro) + L-proline + ATP = L-prolyl-tRNA(Pro) + AMP + diphosphate. Functionally, catalyzes the attachment of proline to tRNA(Pro) in a two-step reaction: proline is first activated by ATP to form Pro-AMP and then transferred to the acceptor end of tRNA(Pro). As ProRS can inadvertently accommodate and process non-cognate amino acids such as alanine and cysteine, to avoid such errors it has two additional distinct editing activities against alanine. One activity is designated as 'pretransfer' editing and involves the tRNA(Pro)-independent hydrolysis of activated Ala-AMP. The other activity is designated 'posttransfer' editing and involves deacylation of mischarged Ala-tRNA(Pro). The misacylated Cys-tRNA(Pro) is not edited by ProRS. This is Proline--tRNA ligase from Mycobacterium tuberculosis (strain CDC 1551 / Oshkosh).